The primary structure comprises 597 residues: Scarecrow-like protein 5 (597 aa).

The disordered stretch occupies residues 111 to 172; the sequence is ESSSGTKSHP…SPLSGSSATN (62 aa). The segment covering 123–169 has biased composition (low complexity); that stretch reads NNKNNSSSTTSFSSNESPISQANNNNLSRFNNHSPEENNNSPLSGSS. Residues 218-597 enclose the GRAS domain; that stretch reads SMEMISRGDL…QPLITSCAWR (380 aa). The leucine repeat I (LRI) stretch occupies residues 225-285; sequence GDLKGVLYEC…VARLASSGSS (61 aa). The tract at residues 304–369 is VHIID; it reads MHILYEACPY…GGPPNVRITG (66 aa). Residues 335–339 carry the VHIID motif; that stretch reads VHIID. The leucine repeat II (LRII) stretch occupies residues 385–417; sequence LVGQRLGKLAEMCGVPFEFHGAALCCTEVEIEK. The PFYRE stretch occupies residues 426-520; the sequence is LAVNFPLVLH…QHCLAREVVN (95 aa). The tract at residues 523–597 is SAW; the sequence is ACEGVEREER…QPLITSCAWR (75 aa).

The protein belongs to the GRAS family. As to expression, expressed in seedlings, roots, shoots, leaves, flowers and siliques.

It localises to the nucleus. Functionally, probable transcription factor involved in plant development. The chain is Scarecrow-like protein 5 (SCL5) from Arabidopsis thaliana (Mouse-ear cress).